Reading from the N-terminus, the 287-residue chain is Phosphatidylserine decarboxylase proenzyme (287 aa).

Residues Asp-89, His-146, and Ser-252 each act as charge relay system; for autoendoproteolytic cleavage activity in the active site. Ser-252 (schiff-base intermediate with substrate; via pyruvic acid; for decarboxylase activity) is an active-site residue. Ser-252 bears the Pyruvic acid (Ser); by autocatalysis mark.

Belongs to the phosphatidylserine decarboxylase family. PSD-B subfamily. Prokaryotic type I sub-subfamily. As to quaternary structure, heterodimer of a large membrane-associated beta subunit and a small pyruvoyl-containing alpha subunit. Requires pyruvate as cofactor. Post-translationally, is synthesized initially as an inactive proenzyme. Formation of the active enzyme involves a self-maturation process in which the active site pyruvoyl group is generated from an internal serine residue via an autocatalytic post-translational modification. Two non-identical subunits are generated from the proenzyme in this reaction, and the pyruvate is formed at the N-terminus of the alpha chain, which is derived from the carboxyl end of the proenzyme. The autoendoproteolytic cleavage occurs by a canonical serine protease mechanism, in which the side chain hydroxyl group of the serine supplies its oxygen atom to form the C-terminus of the beta chain, while the remainder of the serine residue undergoes an oxidative deamination to produce ammonia and the pyruvoyl prosthetic group on the alpha chain. During this reaction, the Ser that is part of the protease active site of the proenzyme becomes the pyruvoyl prosthetic group, which constitutes an essential element of the active site of the mature decarboxylase.

Its subcellular location is the cell membrane. The enzyme catalyses a 1,2-diacyl-sn-glycero-3-phospho-L-serine + H(+) = a 1,2-diacyl-sn-glycero-3-phosphoethanolamine + CO2. It participates in phospholipid metabolism; phosphatidylethanolamine biosynthesis; phosphatidylethanolamine from CDP-diacylglycerol: step 2/2. Its function is as follows. Catalyzes the formation of phosphatidylethanolamine (PtdEtn) from phosphatidylserine (PtdSer). In Shewanella amazonensis (strain ATCC BAA-1098 / SB2B), this protein is Phosphatidylserine decarboxylase proenzyme.